The chain runs to 151 residues: Neuroglobin (151 aa).

Positions 1–149 (MERPESELIR…VVQAMSRGWD (149 aa)) constitute a Globin domain. Heme b contacts are provided by histidine 64 and histidine 96.

Belongs to the globin family. As to quaternary structure, monomer. Homodimer and homotetramer; disulfide-linked. Mainly monomeric but also detected as part of homodimers and homotetramers. Interacts with 14-3-3 proteins; regulates the phosphorylation of NGB. Could interact (ferrous form) with G-alpha(i) proteins (GTP-bound form). In terms of processing, phosphorylated during hypoxia by ERK1/ERK2. Phosphorylation regulates the heme pocket hexacoordination preventing the association of His-64 with the heme metal center. Thereby, promotes the access of dioxygen and nitrite to the heme and stimulates the nitrite reductase activity. Phosphorylation during hypoxia is stabilized by 14-3-3 proteins. In terms of tissue distribution, widely distributed throughout the adult brain, including cerebral cortex, hippocampus, thalamus, hypothalamus, olfactory bulb, and cerebellum.

It localises to the cytoplasm. The protein resides in the cytosol. The protein localises to the mitochondrion matrix. The enzyme catalyses Fe(III)-heme b-[protein] + nitric oxide + H2O = Fe(II)-heme b-[protein] + nitrite + 2 H(+). Functionally, monomeric globin with a bis-histidyl six-coordinate heme-iron atom through which it can bind dioxygen, carbon monoxide and nitric oxide. Could help transport oxygen and increase its availability to the metabolically active neuronal tissues, though its low quantity in tissues as well as its high affinity for dioxygen, which may limit its oxygen-releasing ability, argue against it. The ferrous/deoxygenated form exhibits a nitrite reductase activity and it could produce nitric oxide which in turn inhibits cellular respiration in response to hypoxia. In its ferrous/deoxygenated state, it may also exhibit GDI (Guanine nucleotide Dissociation Inhibitor) activity toward heterotrimeric G-alpha proteins, thereby regulating signal transduction to facilitate neuroprotective responses in the wake of hypoxia and associated oxidative stress. The chain is Neuroglobin from Rattus norvegicus (Rat).